A 221-amino-acid polypeptide reads, in one-letter code: Succinate--CoA ligase [ADP-forming] subunit beta, mitochondrial (221 aa).

The region spanning 1–122 (DVVIKAQVLA…DSNSAYRQKI (122 aa)) is the ATP-grasp domain. ATP is bound at residue K5. Residues K22 and K26 each carry the N6-acetyllysine modification. Position 114 is a phosphoserine (S114). Position 139 is a phosphothreonine (T139). 171-173 (GIM) lines the substrate pocket. K196 carries the N6-acetyllysine modification.

This sequence belongs to the succinate/malate CoA ligase beta subunit family. ATP-specific subunit beta subfamily. As to quaternary structure, heterodimer of an alpha and a beta subunit. The beta subunit determines specificity for ATP. Interacts with ALAS2.

The protein localises to the mitochondrion. It catalyses the reaction succinate + ATP + CoA = succinyl-CoA + ADP + phosphate. It participates in carbohydrate metabolism; tricarboxylic acid cycle; succinate from succinyl-CoA (ligase route): step 1/1. Its function is as follows. ATP-specific succinyl-CoA synthetase functions in the citric acid cycle (TCA), coupling the hydrolysis of succinyl-CoA to the synthesis of ATP and thus represents the only step of substrate-level phosphorylation in the TCA. The beta subunit provides nucleotide specificity of the enzyme and binds the substrate succinate, while the binding sites for coenzyme A and phosphate are found in the alpha subunit. The protein is Succinate--CoA ligase [ADP-forming] subunit beta, mitochondrial of Mesocricetus auratus (Golden hamster).